The following is a 214-amino-acid chain: Probable transaldolase (214 aa).

Residue K83 is the Schiff-base intermediate with substrate of the active site.

It belongs to the transaldolase family. Type 3B subfamily.

The protein localises to the cytoplasm. It catalyses the reaction D-sedoheptulose 7-phosphate + D-glyceraldehyde 3-phosphate = D-erythrose 4-phosphate + beta-D-fructose 6-phosphate. Its pathway is carbohydrate degradation; pentose phosphate pathway; D-glyceraldehyde 3-phosphate and beta-D-fructose 6-phosphate from D-ribose 5-phosphate and D-xylulose 5-phosphate (non-oxidative stage): step 2/3. In terms of biological role, transaldolase is important for the balance of metabolites in the pentose-phosphate pathway. The chain is Probable transaldolase from Clostridium tetani (strain Massachusetts / E88).